A 341-amino-acid polypeptide reads, in one-letter code: Ketol-acid reductoisomerase (NADP(+)) (341 aa).

The KARI N-terminal Rossmann domain maps to 1-181; it reads MARVYREGDI…GCARAGVLET (181 aa). NADP(+) is bound by residues 24–27, serine 50, serine 52, and 82–85; these read FGSQ and DERQ. Histidine 107 is a catalytic residue. Position 133 (glycine 133) interacts with NADP(+). One can recognise a KARI C-terminal knotted domain in the interval 182–327; sequence TFAEETETDL…AELRALAAEG (146 aa). Aspartate 190, glutamate 194, glutamate 226, and glutamate 230 together coordinate Mg(2+). Serine 251 lines the substrate pocket.

It belongs to the ketol-acid reductoisomerase family. Mg(2+) serves as cofactor.

It catalyses the reaction (2R)-2,3-dihydroxy-3-methylbutanoate + NADP(+) = (2S)-2-acetolactate + NADPH + H(+). The enzyme catalyses (2R,3R)-2,3-dihydroxy-3-methylpentanoate + NADP(+) = (S)-2-ethyl-2-hydroxy-3-oxobutanoate + NADPH + H(+). Its pathway is amino-acid biosynthesis; L-isoleucine biosynthesis; L-isoleucine from 2-oxobutanoate: step 2/4. It participates in amino-acid biosynthesis; L-valine biosynthesis; L-valine from pyruvate: step 2/4. Its function is as follows. Involved in the biosynthesis of branched-chain amino acids (BCAA). Catalyzes an alkyl-migration followed by a ketol-acid reduction of (S)-2-acetolactate (S2AL) to yield (R)-2,3-dihydroxy-isovalerate. In the isomerase reaction, S2AL is rearranged via a Mg-dependent methyl migration to produce 3-hydroxy-3-methyl-2-ketobutyrate (HMKB). In the reductase reaction, this 2-ketoacid undergoes a metal-dependent reduction by NADPH to yield (R)-2,3-dihydroxy-isovalerate. The sequence is that of Ketol-acid reductoisomerase (NADP(+)) from Rubrobacter xylanophilus (strain DSM 9941 / JCM 11954 / NBRC 16129 / PRD-1).